Reading from the N-terminus, the 904-residue chain is Protein abrupt (904 aa).

The span at 1–15 (MTESTQLQTAENNNA) shows a compositional bias: polar residues. Disordered regions lie at residues 1–30 (MTES…TSSV) and 53–72 (GSAL…HQQQ). The BTB domain occupies 103 to 168 (VDVTLACDER…MYNGEVNVSH (66 aa)). Residues 204-238 (SHNSSNNNNNNSSSNNSLSNNNNNNNNNAESSNHN) are compositionally biased toward low complexity. Disordered regions lie at residues 204 to 287 (SHNS…LNSP), 349 to 390 (ASSA…PPPQ), 411 to 438 (LLDR…KDRE), and 451 to 501 (ALEN…NQRS). The span at 239 to 253 (KISSYLSPNQTSAAC) shows a compositional bias: polar residues. The span at 254 to 286 (NNSSNSNSNNHSSSHNNSSSNNISGSLNSSLNS) shows a compositional bias: low complexity. Residues 429 to 438 (SGRDTSKDRE) are compositionally biased toward basic and acidic residues. The span at 452 to 461 (LENSNGQQAN) shows a compositional bias: polar residues. Phosphoserine is present on serine 474. The span at 481 to 500 (PSDRGDGQHDGTLDGIDNQR) shows a compositional bias: basic and acidic residues. 2 consecutive C2H2-type zinc fingers follow at residues 544–567 (RPCP…EDKH) and 573–596 (YRCV…SRQH). 2 disordered regions span residues 633–696 (ELRA…GGSS) and 832–904 (AAGN…VHNT). Residues 642-655 (GGSGSSGGGGGGGS) are compositionally biased toward gly residues. A compositionally biased stretch (acidic residues) spans 671–682 (DDAEDSDDDPED). 3 positions are modified to phosphoserine: serine 837, serine 846, and serine 868. Basic and acidic residues predominate over residues 851 to 868 (MGHDEMAENDGDMRREGS). Positions 876–886 (DNNQSGSNHEV) are enriched in polar residues. 2 positions are modified to phosphoserine: serine 889 and serine 896.

Expressed in CNS midline cells during embryonic stages 9-13. Expression also seen in cells of the stomagastric nervous system. Segmentally repeated stripes of ectodermal expression appear at stage 11 that become uniform by stage 12 and throughout embryogenesis. Expressed at variable levels in somatic muscles from stage 16 and in all imaginal disks during larval development. Expression is seen in da neurons that grow in two-dimensional dendrites underneath the epidermis during late embryonic, larval, and pupal stages.

It localises to the nucleus. Functionally, expression is vital for development; may be involved in transcriptional regulation. In embryos, muscle specific expression is required for segmental nerve b (SNb) motoneuron target recognition within ventral longitudinal muscles. Has a role in establishing and maintaining embryonic muscle attachments, adult sensory cell formation (macrochaetae) and morphogenesis of adult appendages (legs, antenna aristae and male external genitalia). Has a role in the morphogenesis of the class I dendritic neurons: selective expression of ab in class I da neurons plays a pivotal role in forming dendritic arbors, which are characteristic of the class I cells. The development of more complex arbors of class II-IV neurons depends on the absence of ab. This chain is Protein abrupt (ab), found in Drosophila melanogaster (Fruit fly).